Here is a 447-residue protein sequence, read N- to C-terminus: Argininosuccinate synthase (447 aa).

Residues 17–25 (AFSGGLDTS) and Ala-43 each bind ATP. Tyr-99 serves as a coordination point for L-citrulline. Residues Gly-129 and Thr-131 each coordinate ATP. Residues Thr-131, Asn-135, and Asp-136 each contribute to the L-aspartate site. Asn-135 contributes to the L-citrulline binding site. Asp-136 lines the ATP pocket. Residues Arg-139 and Ser-192 each coordinate L-citrulline. Asp-194 contacts ATP. L-citrulline contacts are provided by Thr-201, Glu-203, and Glu-280.

This sequence belongs to the argininosuccinate synthase family. Type 2 subfamily. As to quaternary structure, homotetramer.

It is found in the cytoplasm. The catalysed reaction is L-citrulline + L-aspartate + ATP = 2-(N(omega)-L-arginino)succinate + AMP + diphosphate + H(+). It functions in the pathway amino-acid biosynthesis; L-arginine biosynthesis; L-arginine from L-ornithine and carbamoyl phosphate: step 2/3. This chain is Argininosuccinate synthase (argG), found in Escherichia coli O157:H7.